The sequence spans 117 residues: Putative iron-sulfur cluster insertion protein ErpA (117 aa).

Iron-sulfur cluster is bound by residues cysteine 45, cysteine 109, and cysteine 111.

This sequence belongs to the HesB/IscA family. As to quaternary structure, homodimer. Requires iron-sulfur cluster as cofactor.

Functionally, required for insertion of 4Fe-4S clusters. The polypeptide is Putative iron-sulfur cluster insertion protein ErpA (Chromobacterium violaceum (strain ATCC 12472 / DSM 30191 / JCM 1249 / CCUG 213 / NBRC 12614 / NCIMB 9131 / NCTC 9757 / MK)).